Reading from the N-terminus, the 275-residue chain is Ribosomal RNA small subunit methyltransferase A (275 aa).

S-adenosyl-L-methionine contacts are provided by N21, L23, G48, E69, D94, and N115.

Belongs to the class I-like SAM-binding methyltransferase superfamily. rRNA adenine N(6)-methyltransferase family. RsmA subfamily.

It localises to the cytoplasm. It catalyses the reaction adenosine(1518)/adenosine(1519) in 16S rRNA + 4 S-adenosyl-L-methionine = N(6)-dimethyladenosine(1518)/N(6)-dimethyladenosine(1519) in 16S rRNA + 4 S-adenosyl-L-homocysteine + 4 H(+). Specifically dimethylates two adjacent adenosines (A1518 and A1519) in the loop of a conserved hairpin near the 3'-end of 16S rRNA in the 30S particle. May play a critical role in biogenesis of 30S subunits. This chain is Ribosomal RNA small subunit methyltransferase A, found in Clostridium botulinum (strain Okra / Type B1).